A 310-amino-acid chain; its full sequence is Pantothenate kinase (310 aa).

95–102 provides a ligand contact to ATP; sequence GSVAVGKS.

Belongs to the prokaryotic pantothenate kinase family.

It is found in the cytoplasm. The catalysed reaction is (R)-pantothenate + ATP = (R)-4'-phosphopantothenate + ADP + H(+). Its pathway is cofactor biosynthesis; coenzyme A biosynthesis; CoA from (R)-pantothenate: step 1/5. This chain is Pantothenate kinase, found in Rhodococcus erythropolis (strain PR4 / NBRC 100887).